The sequence spans 99 residues: uncharacterized protein (99 aa).

A coiled-coil region spans residues Glu-3–Tyr-68.

This is an uncharacterized protein from Aquifex aeolicus (strain VF5).